Consider the following 217-residue polypeptide: Imidazole glycerol phosphate synthase subunit HisH (217 aa).

In terms of domain architecture, Glutamine amidotransferase type-1 spans 3 to 217 (TIAIVDYGMG…IYRNFVHWKP (215 aa)). Residue Cys82 is the Nucleophile of the active site. Active-site residues include His197 and Glu199.

As to quaternary structure, heterodimer of HisH and HisF.

It is found in the cytoplasm. It catalyses the reaction 5-[(5-phospho-1-deoxy-D-ribulos-1-ylimino)methylamino]-1-(5-phospho-beta-D-ribosyl)imidazole-4-carboxamide + L-glutamine = D-erythro-1-(imidazol-4-yl)glycerol 3-phosphate + 5-amino-1-(5-phospho-beta-D-ribosyl)imidazole-4-carboxamide + L-glutamate + H(+). The catalysed reaction is L-glutamine + H2O = L-glutamate + NH4(+). The protein operates within amino-acid biosynthesis; L-histidine biosynthesis; L-histidine from 5-phospho-alpha-D-ribose 1-diphosphate: step 5/9. Its function is as follows. IGPS catalyzes the conversion of PRFAR and glutamine to IGP, AICAR and glutamate. The HisH subunit catalyzes the hydrolysis of glutamine to glutamate and ammonia as part of the synthesis of IGP and AICAR. The resulting ammonia molecule is channeled to the active site of HisF. This is Imidazole glycerol phosphate synthase subunit HisH from Ralstonia nicotianae (strain ATCC BAA-1114 / GMI1000) (Ralstonia solanacearum).